The following is a 436-amino-acid chain: G2/mitotic-specific cyclin-B (436 aa).

The segment covering 1–17 (MSTINNPLNIKTRSHSS) has biased composition (polar residues). The interval 1 to 33 (MSTINNPLNIKTRSHSSMGGGMIMDENKVPKSS) is disordered.

Belongs to the cyclin family. Cyclin AB subfamily. Interacts with the cdk1 protein kinase to form a serine/threonine kinase holoenzyme complex also known as maturation promoting factor (MPF). The cyclin subunit imparts substrate specificity to the complex.

Its function is as follows. Essential for the control of the cell cycle at the G2/M (mitosis) transition. This is G2/mitotic-specific cyclin-B (cycB) from Dictyostelium discoideum (Social amoeba).